A 162-amino-acid polypeptide reads, in one-letter code: MADGAAEIRGRLRRVVLDEDIGGALSPMQEADRNQAIADLAADNRFALGTHPDAVTILHLSVQDGRLVFDVRDEADETLQTLVLAPGPFRSMIRDYQMLLDSYATAVAEGREARIQAIDMGRRGLHNEGAELVMARLDGKVLLDFDTARRLFTLICALHRRA.

This sequence belongs to the UPF0262 family.

This Acidiphilium cryptum (strain JF-5) protein is UPF0262 protein Acry_0160.